The sequence spans 260 residues: 4-hydroxy-tetrahydrodipicolinate reductase (260 aa).

NAD(+)-binding positions include 8–13 (GAAGRM), Glu-35, 91–93 (GTT), and 115–118 (APNM). The active-site Proton donor/acceptor is the His-148. His-149 lines the (S)-2,3,4,5-tetrahydrodipicolinate pocket. Lys-152 acts as the Proton donor in catalysis. 158 to 159 (GT) lines the (S)-2,3,4,5-tetrahydrodipicolinate pocket.

Belongs to the DapB family.

It is found in the cytoplasm. The enzyme catalyses (S)-2,3,4,5-tetrahydrodipicolinate + NAD(+) + H2O = (2S,4S)-4-hydroxy-2,3,4,5-tetrahydrodipicolinate + NADH + H(+). It carries out the reaction (S)-2,3,4,5-tetrahydrodipicolinate + NADP(+) + H2O = (2S,4S)-4-hydroxy-2,3,4,5-tetrahydrodipicolinate + NADPH + H(+). The protein operates within amino-acid biosynthesis; L-lysine biosynthesis via DAP pathway; (S)-tetrahydrodipicolinate from L-aspartate: step 4/4. Catalyzes the conversion of 4-hydroxy-tetrahydrodipicolinate (HTPA) to tetrahydrodipicolinate. This Rubrobacter xylanophilus (strain DSM 9941 / JCM 11954 / NBRC 16129 / PRD-1) protein is 4-hydroxy-tetrahydrodipicolinate reductase.